Consider the following 351-residue polypeptide: Neutral protease 2 homolog MGG_10927 (351 aa).

Positions 1-16 (MKFSIGVSLLATLAGA) are cleaved as a signal peptide. A propeptide spanning residues 17 to 177 (VNVDMAKRDT…AAFLAKRTIV (161 aa)) is cleaved from the precursor. 2 cysteine pairs are disulfide-bonded: cysteine 181–cysteine 253 and cysteine 260–cysteine 278. Residue histidine 303 coordinates Zn(2+). Residue glutamate 304 is part of the active site. Residue histidine 307 participates in Zn(2+) binding.

This sequence belongs to the peptidase M35 family. Zn(2+) serves as cofactor.

The protein resides in the secreted. The enzyme catalyses Preferential cleavage of bonds with hydrophobic residues in P1'. Also 3-Asn-|-Gln-4 and 8-Gly-|-Ser-9 bonds in insulin B chain.. Secreted metalloproteinase that allows assimilation of proteinaceous substrates. Shows high activities on basic nuclear substrates such as histone and protamine. The protein is Neutral protease 2 homolog MGG_10927 of Colletotrichum graminicola (strain M1.001 / M2 / FGSC 10212) (Maize anthracnose fungus).